A 154-amino-acid polypeptide reads, in one-letter code: MTEEQRGVPLSELSLQQLGELQKNCEQELTFFQDSFNALKALLSRNEKSISALEDVKVGTAGHTALIPLSESLYIRAELSDPNKHMVEIGTGYFVELDREKAKGIFDRKKEHIAKQVETVEGILKEKRRTRAYISDAFQTKVQAQLANMNTQQS.

It belongs to the prefoldin subunit alpha family. In terms of assembly, heterohexamer of two PFD-alpha type and four PFD-beta type subunits.

Functionally, binds specifically to cytosolic chaperonin (c-CPN) and transfers target proteins to it. Binds to nascent polypeptide chain and promotes folding in an environment in which there are many competing pathways for nonnative proteins. The sequence is that of Probable prefoldin subunit 5 from Caenorhabditis briggsae.